Consider the following 247-residue polypeptide: Probable transcriptional regulatory protein PC1_1817 (247 aa).

The protein belongs to the TACO1 family.

It is found in the cytoplasm. The chain is Probable transcriptional regulatory protein PC1_1817 from Pectobacterium carotovorum subsp. carotovorum (strain PC1).